A 214-amino-acid chain; its full sequence is Ribosomal RNA small subunit methyltransferase G (214 aa).

Residues G77, L82, 128 to 129 (VE), and R143 each bind S-adenosyl-L-methionine.

It belongs to the methyltransferase superfamily. RNA methyltransferase RsmG family.

It is found in the cytoplasm. It carries out the reaction guanosine(527) in 16S rRNA + S-adenosyl-L-methionine = N(7)-methylguanosine(527) in 16S rRNA + S-adenosyl-L-homocysteine. Specifically methylates the N7 position of guanine in position 527 of 16S rRNA. In Nitrosomonas eutropha (strain DSM 101675 / C91 / Nm57), this protein is Ribosomal RNA small subunit methyltransferase G.